The sequence spans 310 residues: Cysteine synthase (310 aa).

Lys46 bears the N6-(pyridoxal phosphate)lysine mark. Residues Asn76, 180-184 (GTGGT), and Ser268 each bind pyridoxal 5'-phosphate.

The protein belongs to the cysteine synthase/cystathionine beta-synthase family. Homodimer. Pyridoxal 5'-phosphate serves as cofactor.

The enzyme catalyses O-acetyl-L-serine + hydrogen sulfide = L-cysteine + acetate. It participates in amino-acid biosynthesis; L-cysteine biosynthesis; L-cysteine from L-serine: step 2/2. The chain is Cysteine synthase (cysK) from Staphylococcus aureus (strain Mu50 / ATCC 700699).